Here is a 90-residue protein sequence, read N- to C-terminus: Small ribosomal subunit protein uS15c (90 aa).

This sequence belongs to the universal ribosomal protein uS15 family. Part of the 30S ribosomal subunit.

Its subcellular location is the plastid. The protein localises to the chloroplast. This Buxus microphylla (Littleleaf boxwood) protein is Small ribosomal subunit protein uS15c (rps15).